The sequence spans 261 residues: 3-methyl-2-oxobutanoate hydroxymethyltransferase (261 aa).

Mg(2+)-binding residues include aspartate 42 and aspartate 81. Residues 42 to 43 (DS), aspartate 81, and lysine 110 each bind 3-methyl-2-oxobutanoate. Position 112 (glutamate 112) interacts with Mg(2+). Glutamate 179 (proton acceptor) is an active-site residue.

The protein belongs to the PanB family. In terms of assembly, homodecamer; pentamer of dimers. Mg(2+) is required as a cofactor.

The protein resides in the cytoplasm. The enzyme catalyses 3-methyl-2-oxobutanoate + (6R)-5,10-methylene-5,6,7,8-tetrahydrofolate + H2O = 2-dehydropantoate + (6S)-5,6,7,8-tetrahydrofolate. It functions in the pathway cofactor biosynthesis; coenzyme A biosynthesis. Its function is as follows. Catalyzes the reversible reaction in which hydroxymethyl group from 5,10-methylenetetrahydrofolate is transferred onto alpha-ketoisovalerate to form ketopantoate. The sequence is that of 3-methyl-2-oxobutanoate hydroxymethyltransferase from Pyrobaculum islandicum (strain DSM 4184 / JCM 9189 / GEO3).